The primary structure comprises 512 residues: Glutathione-binding protein GsiB (512 aa).

Positions 1-26 (MTQFITHKWLAALGLASSIAAFPALA) are cleaved as a signal peptide.

The protein belongs to the bacterial solute-binding protein 5 family. The complex is composed of two ATP-binding proteins (GsiA), two transmembrane proteins (GsiC and GsiD) and a solute-binding protein (GsiB).

The protein localises to the periplasm. Part of the ABC transporter complex GsiABCD involved in glutathione import. Binds glutathione. This is Glutathione-binding protein GsiB from Salmonella choleraesuis (strain SC-B67).